The primary structure comprises 433 residues: 3-phosphoshikimate 1-carboxyvinyltransferase (433 aa).

The 3-phosphoshikimate site is built by lysine 23, serine 24, and arginine 28. Lysine 23 is a binding site for phosphoenolpyruvate. Phosphoenolpyruvate-binding residues include glycine 95 and arginine 123. 3-phosphoshikimate contacts are provided by serine 167, glutamine 169, aspartate 317, and lysine 344. Glutamine 169 contacts phosphoenolpyruvate. Aspartate 317 acts as the Proton acceptor in catalysis. Residues arginine 348 and arginine 390 each coordinate phosphoenolpyruvate.

The protein belongs to the EPSP synthase family. Monomer.

The protein resides in the cytoplasm. It catalyses the reaction 3-phosphoshikimate + phosphoenolpyruvate = 5-O-(1-carboxyvinyl)-3-phosphoshikimate + phosphate. It participates in metabolic intermediate biosynthesis; chorismate biosynthesis; chorismate from D-erythrose 4-phosphate and phosphoenolpyruvate: step 6/7. Functionally, catalyzes the transfer of the enolpyruvyl moiety of phosphoenolpyruvate (PEP) to the 5-hydroxyl of shikimate-3-phosphate (S3P) to produce enolpyruvyl shikimate-3-phosphate and inorganic phosphate. This Staphylococcus epidermidis (strain ATCC 12228 / FDA PCI 1200) protein is 3-phosphoshikimate 1-carboxyvinyltransferase.